The primary structure comprises 478 residues: Calcium uptake protein 1, mitochondrial (478 aa).

A mitochondrion-targeting transit peptide spans 1 to 33; that stretch reads MFRLNSLSALAELAVGSRWYHGGSQPTQIRRRL. The disordered stretch occupies residues 61–85; the sequence is PSANNIKSELGDKGKSKEEGEDCNA. Positions 69–85 are enriched in basic and acidic residues; sequence ELGDKGKSKEEGEDCNA. The interval 101-112 is polybasic region; sequence KKKKRSGFRDRK. S124 carries the post-translational modification Phosphoserine. The k/R-ring stretch occupies residues 128–131; the sequence is KIFR. Positions 220 to 255 constitute an EF-hand 1 domain; that stretch reads TPQRNFEIAFKMFDLNGDGEVDMEEFEQVQSIIRSQ. Ca(2+)-binding residues include D233, N235, D237, E239, and E244. Residues 261 to 265 are k/R-ring; it reads RHRDR. The EF-hand 2 domain maps to 410-445; sequence LSDHVCDVVFALFDCDGNGELSNKEFVSIMKQRLMR. D423, D425, N427, E429, and E434 together coordinate Ca(2+). Residue R457 is modified to Asymmetric dimethylarginine. The tract at residues 457–467 is C-helix region; that stretch reads RLMQAMWKCAQ.

It belongs to the MICU1 family. MICU1 subfamily. In terms of assembly, heterodimer; disulfide-linked; heterodimerizes with MICU2 or MICU3. Homodimer; disulfide-linked. Component of the uniplex complex, composed of MCU, EMRE/SMDT1, MICU1 and MICU2 (or MICU3) in a 4:4:1:1 stoichiometry. The composition of calcium sensors within the uniplex complex can differ depending on tissues: a MICU1 homodimer can be present instead of the MICU1-MICU2 heterodimer in skeletal-muscle and kidney. MICU1 is recruited to the uniplex complex by EMRE/SMDT1, and it associates with MCU at low calcium levels, occluding the pore of the MCU channel. Associates with the MICOS complex. Interacts with SLC25A23. Interacts with CHCHD4/MIA40; which introduces the interchain disulfide bond with MICU2. Interacts (when methylated) with UCP2; leading to decrease the calcium sensitivity of MICU1. Phosphorylation at Ser-124 by AKT1 impairs its maturation and stability. Post-translationally, asymmetric dimethylation at Arg-457 by PRMT1 decreases the calcium sensitivity of MICU1 by promoting interaction with UCP2. In terms of processing, degraded by YME1L1 when not complexed as homodimer or heterodimer. Not degraded when complexed as homodimer or heterodimer; the presence of the interchain disulfide bond protecting MICU1 from degradation by YME1L1.

It localises to the mitochondrion intermembrane space. The protein resides in the mitochondrion inner membrane. Functionally, calcium sensor of the mitochondrial calcium uniporter (MCU) channel, which senses calcium level via its EF-hand domains. MICU1 and MICU2 (or MICU3) form a disulfide-linked heterodimer that stimulates and inhibits MCU activity, depending on the concentration of calcium. At low calcium levels, MICU1 occludes the pore of the MCU channel, preventing mitochondrial calcium uptake. At higher calcium levels, calcium-binding to MICU1 and MICU2 (or MICU3) induces a conformational change that weakens MCU-MICU1 interactions and moves the MICU1-MICU2 heterodimer away from the pore, allowing calcium permeation through the MCU channel. Also required to protect against manganese toxicity by preventing manganese uptake by MCU: mechanistically, manganese-binding to its EF-hand domains does not induce any conformational change, maintaining MCU pore occlusion. Acts as a regulator of mitochondrial cristae structure independently of its ability to regulate the mitochondrial calcium uniporter channel. Regulates glucose-dependent insulin secretion in pancreatic beta-cells by regulating mitochondrial calcium uptake. Induces T-helper 1-mediated autoreactivity, which is accompanied by the release of IFNG. The protein is Calcium uptake protein 1, mitochondrial (MICU1) of Bos taurus (Bovine).